A 743-amino-acid polypeptide reads, in one-letter code: Neutral ceramidase (743 aa).

At 1 to 14 (MASKSRRLSGLEIS) the chain is on the cytoplasmic side. Residues 15 to 35 (LIVLFLLMTAVSVALITVLAL) traverse the membrane as a helical; Signal-anchor for type II membrane protein segment. Residues 36–743 (KQESDKKEEV…FKVARSFYYF (708 aa)) are Lumenal-facing. The interval 40 to 60 (DKKEEVTPEEPSPSVTPPEKP) is disordered. Positions 49–59 (EPSPSVTPPEK) are enriched in pro residues. Residues His151 and His260 each coordinate Zn(2+). N-linked (GlcNAc...) asparagine glycosylation is present at Asn265. The Nucleophile role is filled by Ser312. Intrachain disulfides connect Cys320/Cys334 and Cys327/Cys342. Residues Asn331, Asn389, Asn398, and Asn451 are each glycosylated (N-linked (GlcNAc...) asparagine). Cysteines 406 and 456 form a disulfide. Zn(2+) contacts are provided by Glu498 and Tyr538. A glycan (N-linked (GlcNAc...) asparagine) is linked at Asn661. Ca(2+)-binding residues include Asp672, Ser674, and Thr677. Asn720 carries N-linked (GlcNAc...) asparagine glycosylation.

The protein belongs to the neutral ceramidase family. It depends on Zn(2+) as a cofactor. N-glycosylated. Post-translationally, O-glycosylated. As to expression, detected in intestine (at protein level).

The protein resides in the cell membrane. It localises to the membrane raft. It is found in the membrane. The protein localises to the caveola. Its subcellular location is the golgi apparatus membrane. The protein resides in the mitochondrion. It localises to the secreted. It is found in the extracellular exosome. The enzyme catalyses an N-acylsphing-4-enine + H2O = sphing-4-enine + a fatty acid. It carries out the reaction N-dodecanoylsphing-4-enine + H2O = dodecanoate + sphing-4-enine. It participates in lipid metabolism; sphingolipid metabolism. In terms of biological role, plasma membrane ceramidase that hydrolyzes sphingolipid ceramides into sphingosine and free fatty acids at neutral pH. Ceramides, sphingosine, and its phosphorylated form sphingosine-1-phosphate are bioactive lipids that mediate cellular signaling pathways regulating several biological processes including cell proliferation, apoptosis and differentiation. Also catalyzes the reverse reaction allowing the synthesis of ceramides from fatty acids and sphingosine. Together with sphingomyelinase, participates in the production of sphingosine and sphingosine-1-phosphate from the degradation of sphingomyelin, a sphingolipid enriched in the plasma membrane of cells. Also participates in the hydrolysis of ceramides from the extracellular milieu allowing the production of sphingosine-1-phosphate inside and outside cells. The polypeptide is Neutral ceramidase (asah2) (Danio rerio (Zebrafish)).